Consider the following 445-residue polypeptide: tRNA(Ile2) 2-agmatinylcytidine synthetase TiaS (445 aa).

A DNA-binding region (OB) is located at residues 278–349 (VVVRGSVAEK…KDGLVLNAEY (72 aa)).

The protein belongs to the TiaS family.

It is found in the cytoplasm. It catalyses the reaction cytidine(34) in tRNA(Ile2) + agmatine + ATP + H2O = 2-agmatinylcytidine(34) in tRNA(Ile2) + AMP + 2 phosphate + 2 H(+). Functionally, ATP-dependent agmatine transferase that catalyzes the formation of 2-agmatinylcytidine (agm2C) at the wobble position (C34) of tRNA(Ile2), converting the codon specificity from AUG to AUA. The protein is tRNA(Ile2) 2-agmatinylcytidine synthetase TiaS of Thermofilum pendens (strain DSM 2475 / Hrk 5).